Consider the following 558-residue polypeptide: Polysialic acid transport protein KpsD (558 aa).

An N-terminal signal peptide occupies residues 1 to 20; the sequence is MKLFKSILLIAACHAAQASA.

It to E.coli K5 KpsD.

The protein localises to the periplasm. Its function is as follows. Involved in the translocation of the polysialic acid capsule across the outer membrane to the cell surface. May function as the periplasmic binding element of the PSA transport system, in which it transiently interacts with the membrane component of the transporter, binds polysaccharide and transports the polymer to a component in the outer membrane. In Escherichia coli, this protein is Polysialic acid transport protein KpsD (kpsD).